The following is a 174-amino-acid chain: Co-chaperone protein HscB homolog (174 aa).

A J domain is found at 2 to 74 (NYFELFKFSP…IRRAEHMLSL (73 aa)).

It belongs to the HscB family. In terms of assembly, interacts with HscA and stimulates its ATPase activity.

Its function is as follows. Co-chaperone involved in the maturation of iron-sulfur cluster-containing proteins. Seems to help targeting proteins to be folded toward HscA. The sequence is that of Co-chaperone protein HscB homolog from Shewanella baltica (strain OS185).